The primary structure comprises 503 residues: Aromatase 2 (503 aa).

Residue Cys-437 coordinates heme.

It belongs to the cytochrome P450 family. It depends on heme as a cofactor.

It is found in the membrane. The enzyme catalyses testosterone + 3 reduced [NADPH--hemoprotein reductase] + 3 O2 = 17beta-estradiol + formate + 3 oxidized [NADPH--hemoprotein reductase] + 4 H2O + 4 H(+). The catalysed reaction is androst-4-ene-3,17-dione + 3 reduced [NADPH--hemoprotein reductase] + 3 O2 = estrone + formate + 3 oxidized [NADPH--hemoprotein reductase] + 4 H2O + 4 H(+). Functionally, catalyzes the formation of aromatic C18 estrogens from C19 androgens. The chain is Aromatase 2 (CYP19A2) from Sus scrofa (Pig).